Reading from the N-terminus, the 111-residue chain is WAP four-disulfide core domain protein 12 (111 aa).

Positions 1 to 23 (MGSSSFLVLMVSLALVTLVVVEG) are cleaved as a signal peptide. One can recognise a WAP domain in the interval 27–74 (GIEKAGVCPADNVRCFKSNPPQCHTDQDCLGERKCCYLHCGFKCVIPV). Intrachain disulfides connect Cys34–Cys62, Cys41–Cys66, Cys49–Cys61, and Cys55–Cys70. The segment at 80–111 (GGNKDEDVSGPHPEPGWEAKSPGSSSTGCPQI) is disordered. Positions 101–111 (PGSSSTGCPQI) are enriched in polar residues.

The protein resides in the secreted. Its function is as follows. Antibacterial protein. Putative acid-stable proteinase inhibitor. The sequence is that of WAP four-disulfide core domain protein 12 (WFDC12) from Colobus guereza (Mantled guereza).